Consider the following 24-residue polypeptide: Attacin (24 aa).

This sequence belongs to the attacin/sarcotoxin-2 family.

It is found in the secreted. Hemolymph antibacterial protein. The polypeptide is Attacin (Heliothis virescens (Tobacco budworm moth)).